The sequence spans 375 residues: Tyrosine--tRNA ligase (375 aa).

5 residues coordinate L-tyrosine: Tyr-37, Tyr-168, Gln-172, Asp-175, and Gln-190. The 'KMSKS' region signature appears at 251–255 (KMSKS). Lys-254 serves as a coordination point for ATP.

The protein belongs to the class-I aminoacyl-tRNA synthetase family. TyrS type 4 subfamily. As to quaternary structure, homodimer.

The protein resides in the cytoplasm. The catalysed reaction is tRNA(Tyr) + L-tyrosine + ATP = L-tyrosyl-tRNA(Tyr) + AMP + diphosphate + H(+). Functionally, catalyzes the attachment of tyrosine to tRNA(Tyr) in a two-step reaction: tyrosine is first activated by ATP to form Tyr-AMP and then transferred to the acceptor end of tRNA(Tyr). This Pyrococcus furiosus (strain ATCC 43587 / DSM 3638 / JCM 8422 / Vc1) protein is Tyrosine--tRNA ligase.